The sequence spans 507 residues: Alkyl hydroperoxide reductase subunit F (507 aa).

207–222 (DVLIVGGGPASGSAAI) contributes to the FAD binding site. Cysteines 335 and 338 form a disulfide. 347 to 361 (DVAVIGGGNSGVEAA) provides a ligand contact to NAD(+). 467 to 477 (TNVPGIFAAGD) is an FAD binding site.

It belongs to the class-II pyridine nucleotide-disulfide oxidoreductase family. As to quaternary structure, homodimer. FAD is required as a cofactor.

Its function is as follows. Serves to protect the cell against DNA damage by alkyl hydroperoxides. It can use either NADH or NADPH as electron donor for direct reduction of redox dyes or of alkyl hydroperoxides when combined with the AhpC protein. The protein is Alkyl hydroperoxide reductase subunit F (ahpF) of Staphylococcus epidermidis (strain ATCC 12228 / FDA PCI 1200).